Here is a 563-residue protein sequence, read N- to C-terminus: Membrane protein insertase YidC (563 aa).

A helical membrane pass occupies residues 1–21 (MDIKRTILIVALAIVTYVGVL). Positions 43 to 62 (APGIPDTAAGTNGSASADVP) are disordered. 5 helical membrane passes run 344–364 (LELT…FWLL), 370–390 (ILGN…GLFF), 440–460 (LGGC…YWVL), 471–491 (WILW…PIIM), and 518–538 (PIIF…YWVV).

It belongs to the OXA1/ALB3/YidC family. Type 1 subfamily. In terms of assembly, interacts with the Sec translocase complex via SecD. Specifically interacts with transmembrane segments of nascent integral membrane proteins during membrane integration.

The protein resides in the cell inner membrane. Required for the insertion and/or proper folding and/or complex formation of integral membrane proteins into the membrane. Involved in integration of membrane proteins that insert both dependently and independently of the Sec translocase complex, as well as at least some lipoproteins. Aids folding of multispanning membrane proteins. The chain is Membrane protein insertase YidC from Pseudomonas syringae pv. syringae (strain B728a).